The following is a 344-amino-acid chain: Probable Delta(7)-sterol 5(6)-desaturase (344 aa).

3 consecutive transmembrane segments (helical) span residues Leu-76 to Leu-96, Gln-123 to Val-143, and Trp-160 to Ile-180. A Fatty acid hydroxylase domain is found at Pro-167 to Gly-292. Positions His-181–His-185 match the Histidine box-1 motif. The Histidine box-2 signature appears at His-194 to His-198. The helical transmembrane segment at His-224 to Ile-244 threads the bilayer. Positions His-269–His-273 match the Histidine box-3 motif.

The protein belongs to the sterol desaturase family. It depends on Fe cation as a cofactor.

It localises to the endoplasmic reticulum membrane. It carries out the reaction a Delta(7)-sterol + 2 Fe(II)-[cytochrome b5] + O2 + 2 H(+) = a Delta(5),Delta(7)-sterol + 2 Fe(III)-[cytochrome b5] + 2 H2O. It functions in the pathway steroid metabolism; ergosterol biosynthesis; ergosterol from zymosterol: step 3/5. Functionally, catalyzes the introduction of a C-5 double bond in the B ring of ergosterol. May contribute to the regulation of ergosterol biosynthesis. The polypeptide is Probable Delta(7)-sterol 5(6)-desaturase (Neurospora crassa (strain ATCC 24698 / 74-OR23-1A / CBS 708.71 / DSM 1257 / FGSC 987)).